A 226-amino-acid chain; its full sequence is Chalcone--flavanone isomerase 1 (226 aa).

3 residues coordinate substrate: Thr-52, Asn-117, and Thr-194.

The protein belongs to the chalcone isomerase family.

It carries out the reaction a chalcone = a flavanone.. Its pathway is secondary metabolite biosynthesis; flavonoid biosynthesis. Its function is as follows. Catalyzes the intramolecular cyclization of bicyclic chalcones into tricyclic (S)-flavanones. Responsible for the isomerization of 4,2',4',6'-tetrahydroxychalcone (also termed chalcone) into naringenin. The protein is Chalcone--flavanone isomerase 1 (CHI1) of Lotus japonicus (Lotus corniculatus var. japonicus).